The sequence spans 621 residues: tRNA uridine 5-carboxymethylaminomethyl modification enzyme MnmG (621 aa).

An FAD-binding site is contributed by 8–13 (GAGHAG). 269–283 (GPRYCPSVEDKIFRF) is an NAD(+) binding site.

It belongs to the MnmG family. Homodimer. Heterotetramer of two MnmE and two MnmG subunits. Requires FAD as cofactor.

The protein localises to the cytoplasm. Its function is as follows. NAD-binding protein involved in the addition of a carboxymethylaminomethyl (cmnm) group at the wobble position (U34) of certain tRNAs, forming tRNA-cmnm(5)s(2)U34. This chain is tRNA uridine 5-carboxymethylaminomethyl modification enzyme MnmG, found in Chlorobium phaeobacteroides (strain DSM 266 / SMG 266 / 2430).